Consider the following 141-residue polypeptide: MQLQLIITTPNGIFFNEKVDIVTVVTAGGHIGIQYGHQPLISTIEISELHINTEGHKDYRICSINGGLLYVEKDKANIITGAIEFKEDIDIEKARREHDYLVEILSNSKNKDSDYFRNELKLKKVINRLKISSNSTQSPKK.

It belongs to the ATPase epsilon chain family. F-type ATPases have 2 components, CF(1) - the catalytic core - and CF(0) - the membrane proton channel. CF(1) has five subunits: alpha(3), beta(3), gamma(1), delta(1), epsilon(1). CF(0) has three main subunits: a, b and c.

Its subcellular location is the cell membrane. In terms of biological role, produces ATP from ADP in the presence of a proton gradient across the membrane. The chain is ATP synthase epsilon chain (atpC) from Mycoplasmopsis pulmonis (strain UAB CTIP) (Mycoplasma pulmonis).